We begin with the raw amino-acid sequence, 196 residues long: Pyroglutamyl-peptidase 1-like protein (196 aa).

Active-site residues include Glu65, Cys127, and His146.

The protein belongs to the peptidase C15 family.

The polypeptide is Pyroglutamyl-peptidase 1-like protein (PGPEP1L) (Homo sapiens (Human)).